The primary structure comprises 73 residues: Large ribosomal subunit protein bL31 (73 aa).

Residues C16, C18, C38, and C41 each contribute to the Zn(2+) site.

The protein belongs to the bacterial ribosomal protein bL31 family. Type A subfamily. Part of the 50S ribosomal subunit. Requires Zn(2+) as cofactor.

Binds the 23S rRNA. The protein is Large ribosomal subunit protein bL31 of Vibrio parahaemolyticus serotype O3:K6 (strain RIMD 2210633).